Reading from the N-terminus, the 1375-residue chain is MAQANSRSRNSATISYPEKRRARVNLGKREVEILKTPYLLETQIESYRKFLQKDIAAEKREDNGLHAAFKSVFPITSYSGYAVLEYVGYSLGGESTLFDVEECKLRGLTYAAPLKVNMRLVIYDKEAPAGKKAIKDIKEQEVYMGEIPLMTETGSLVINGTERVVVSQLHRSPGVFFEHDKGKTHSSGKLLYSARVIPYRGSWLDFEFDPKDCLFVRIDRRRKLPATVILRALGYDTEQILDMFYKTNHFHLNQETVTLDLIPQRLRGELAVVEIKDKKGKVIVEANRRISARHIRLIEKAEINKLELPDDYLYGKVIGKTIIDKETGEIIAHANEEITAELLKNLRATKTASLDTLYINEIECGPYVSDTLRLDTTTNQLEALVEIYRIMRPGEPPTKEAAESLFENLFFSPERYSLSAVGRMKFNRRVGRKELTGLDVLSKEDIVDVLRVLVDIRDGKGDVDDIDHLGNRRIRSVGEMAENQFRVGLVRVERAVKDRLSLADVENLMPQDLVNAKPVSAAIKEFFGSSQLSQFMDQNNPLSEITHKRRVSALGPGGLTRERAGFEVRDVHVTHYGRVCPIETPEGPNIGLINSLAVFARANEYGFLETPYRKVVDRVVTDETEYLSAIEEGDYYIAQANTNVDEKGRLVDDLISCRYKGEFTLTTPDKINYMDVSPRQIVSVAAALIPFLEHDDANRALMGSNMQRQAVPTIRPETPLVGTGMERTVAVDSGVTVIAKRSGVIDSVDASRIVVRVDRKETEDDDDIGVDIYNLTKFTRSNQNTCINQHPIVEVGDKVQKGDVLADGPSTDIGELALGQNLLVAFMPWNGYNFEDSILISERLVEEDRFTTIHIQEFTCVARDTKLGPEEITSDIPNVGESALAKLDESGIVHIGAEVNAGDILVGKVTPKGETQLTPEEKLLRAIFGEKASDVKDTSLRVTPGITGTVIDVRIFTREGVKKDERTLEIEKAELSKVEKDLNDELRVREDALFENLEKLLTGRVAAGGPNKLAKGTKITKSYLADLPRQKWFEIRLQDDAATKRLEASHEHFKELRETRDAKLKDSRQKLTQGGDLAPGVIKIVKVYLAVKRRIQPGDKMAGRHGNKGVISTIVPIEDMPYLEDGTPVDIVLNPLGVPSRMNIGQVLETHLGWAAKGLGKKIGEMIEKGADAKELRKSLKPIYDLSKTQRFDLEALEDPEIVMLAKNLRKGVPISSPVFDGATEEEIKQLLKMADLPTSGQAALYDGRTGKKFDRSVTVGYMYMLKLNHLVDDKMHARSTGSYSLVTQQPLGGKAQFGGQRFGEMEVWALEAYGAAYTLQEMLTVKSDDVAGRTRMYKNIVDGDHRMDAGMPESFNVLVKEIRSLAIDIGLEND.

Belongs to the RNA polymerase beta chain family. As to quaternary structure, the RNAP catalytic core consists of 2 alpha, 1 beta, 1 beta' and 1 omega subunit. When a sigma factor is associated with the core the holoenzyme is formed, which can initiate transcription.

It carries out the reaction RNA(n) + a ribonucleoside 5'-triphosphate = RNA(n+1) + diphosphate. Functionally, DNA-dependent RNA polymerase catalyzes the transcription of DNA into RNA using the four ribonucleoside triphosphates as substrates. This Coxiella burnetii (strain CbuG_Q212) (Coxiella burnetii (strain Q212)) protein is DNA-directed RNA polymerase subunit beta.